The sequence spans 421 residues: UPF0415 protein C7orf25 (421 aa).

This sequence belongs to the UPF0415 family.

The polypeptide is UPF0415 protein C7orf25 (C7orf25) (Homo sapiens (Human)).